Consider the following 255-residue polypeptide: 1-(5-phosphoribosyl)-5-[(5-phosphoribosylamino)methylideneamino] imidazole-4-carboxamide isomerase (255 aa).

The active-site Proton acceptor is the Asp8. Asp129 functions as the Proton donor in the catalytic mechanism.

It belongs to the HisA/HisF family.

Its subcellular location is the cytoplasm. It carries out the reaction 1-(5-phospho-beta-D-ribosyl)-5-[(5-phospho-beta-D-ribosylamino)methylideneamino]imidazole-4-carboxamide = 5-[(5-phospho-1-deoxy-D-ribulos-1-ylimino)methylamino]-1-(5-phospho-beta-D-ribosyl)imidazole-4-carboxamide. It functions in the pathway amino-acid biosynthesis; L-histidine biosynthesis; L-histidine from 5-phospho-alpha-D-ribose 1-diphosphate: step 4/9. The protein is 1-(5-phosphoribosyl)-5-[(5-phosphoribosylamino)methylideneamino] imidazole-4-carboxamide isomerase of Prochlorococcus marinus (strain MIT 9211).